A 336-amino-acid chain; its full sequence is Gibberellin 2-beta-dioxygenase 7 (336 aa).

The Fe2OG dioxygenase domain maps to Leu191 to Pro291. Fe cation is bound by residues His216, Asp218, and His272. Arg282 is an active-site residue. Arg282 lines the 2-oxoglutarate pocket.

This sequence belongs to the iron/ascorbate-dependent oxidoreductase family. GA2OX subfamily. Fe(2+) is required as a cofactor.

It carries out the reaction gibberellin A1 + 2-oxoglutarate + O2 = gibberellin A8 + succinate + CO2. The protein operates within plant hormone biosynthesis; gibberellin biosynthesis. Its function is as follows. Catalyzes the 2-beta-hydroxylation of gibberellins (GA) precursors, rendering them unable to be converted to active GAs. Hydroxylates the C20-GA GA12 and GA53, but is not active on C19-GAs, like GA1, GA4, GA9 and GA20. The protein is Gibberellin 2-beta-dioxygenase 7 (GA2OX7) of Arabidopsis thaliana (Mouse-ear cress).